The primary structure comprises 158 residues: Phosphopantetheine adenylyltransferase (158 aa).

Residue Thr-10 participates in substrate binding. ATP is bound by residues 10 to 11 (TF) and His-18. Substrate contacts are provided by Lys-42, Leu-74, and Arg-88. ATP is bound by residues 89 to 91 (GLR), Glu-99, and 124 to 130 (NSFISST).

The protein belongs to the bacterial CoaD family. Homohexamer. Requires Mg(2+) as cofactor.

It localises to the cytoplasm. The enzyme catalyses (R)-4'-phosphopantetheine + ATP + H(+) = 3'-dephospho-CoA + diphosphate. The protein operates within cofactor biosynthesis; coenzyme A biosynthesis; CoA from (R)-pantothenate: step 4/5. Functionally, reversibly transfers an adenylyl group from ATP to 4'-phosphopantetheine, yielding dephospho-CoA (dPCoA) and pyrophosphate. In Shewanella loihica (strain ATCC BAA-1088 / PV-4), this protein is Phosphopantetheine adenylyltransferase.